Consider the following 184-residue polypeptide: Jacalin-related lectin 2 (184 aa).

The Jacalin-type lectin domain occupies 4–163 (KIKIGPVGTD…LQNIGVYLQP (160 aa)).

It belongs to the jacalin lectin family.

This Arabidopsis thaliana (Mouse-ear cress) protein is Jacalin-related lectin 2 (JAL2).